Reading from the N-terminus, the 251-residue chain is MSMTLQPHSLIELPADLDRDRLPRHVAVIMDGNGRWAKQRNLPRIMGHQRGVDTLKDLLRCCKDWGIEALTAYAFSTENWGRPLPEVEFLMTLFEQVLRRELGEMVAEGVQIHFVGDLTCLPKSLQAEIERAVAATANNQKIKFVVATNYGGRREIIHACRSIAAQVKAGLLDPADIDEVLFERHLYTGGLPDPDLLIRTSGELRISNFFLWQVAYAEIYVTKTLWPDFDRSAFHEALRDYQQRQRRFGRV.

The active site involves Asp-31. Asp-31 provides a ligand contact to Mg(2+). Residues 32-35 (GNGR), Trp-36, Arg-44, His-48, and 76-78 (STE) contribute to the substrate site. The active-site Proton acceptor is the Asn-79. Substrate-binding positions include Trp-80, Arg-82, Arg-199, and 205-207 (RIS). Residue Glu-218 coordinates Mg(2+).

It belongs to the UPP synthase family. In terms of assembly, homodimer. Mg(2+) serves as cofactor.

Its function is as follows. Catalyzes the condensation of isopentenyl diphosphate (IPP) with allylic pyrophosphates generating different type of terpenoids. In Thermosynechococcus vestitus (strain NIES-2133 / IAM M-273 / BP-1), this protein is Isoprenyl transferase.